A 261-amino-acid polypeptide reads, in one-letter code: SURF1-like protein (261 aa).

2 helical membrane passes run 17–37 (LYWA…WQIF) and 223–243 (LSYI…WVFL).

Belongs to the SURF1 family.

It is found in the mitochondrion inner membrane. In terms of biological role, probably involved in the biogenesis of the COX complex. The protein is SURF1-like protein of Monosiga brevicollis (Choanoflagellate).